Reading from the N-terminus, the 357-residue chain is MSKRLLILEDGTIFEGESLGANLDVTGELVFNTGMTGYQESITDQSYNGQILTFTYPIVGNYGVNRDDYESIHPTCKAVVVHEAACRPSNWRMQMSFDEFLKAKNIPGITGVDTRAITKIVREHGTMKASLVQARDEVEHQMSQLQATVLPTNQVETSSTTTAYPSPNTGRKVVVVDFGLKHSILRELSKRECNLTVVPYNTSAQEILEMEPDGVMLTNGPGDPTDVPEAIEMIKEIQGKIPIFGICLGHQLFSLANGAKTYKMKFGHRGFNHAVREIATGRIDFTSQNHGYAVSSENLPEDLMITHVEINDDSVEGVRHKHFPAFSVQFHPDAAPGPHDASYLFDDFMDLMDNFKK.

The tract at residues 1-168 (MSKRLLILED…STTTAYPSPN (168 aa)) is CPSase. Residues serine 46, glycine 220, and glycine 222 each contribute to the L-glutamine site. A Glutamine amidotransferase type-1 domain is found at 172 to 357 (KVVVVDFGLK…FMDLMDNFKK (186 aa)). Catalysis depends on cysteine 247, which acts as the Nucleophile. Leucine 248, glutamine 251, asparagine 289, glycine 291, and tyrosine 292 together coordinate L-glutamine. Catalysis depends on residues histidine 331 and aspartate 333.

This sequence belongs to the CarA family. In terms of assembly, composed of two chains; the small (or glutamine) chain promotes the hydrolysis of glutamine to ammonia, which is used by the large (or ammonia) chain to synthesize carbamoyl phosphate. Tetramer of heterodimers (alpha,beta)4.

The catalysed reaction is hydrogencarbonate + L-glutamine + 2 ATP + H2O = carbamoyl phosphate + L-glutamate + 2 ADP + phosphate + 2 H(+). The enzyme catalyses L-glutamine + H2O = L-glutamate + NH4(+). Its pathway is amino-acid biosynthesis; L-arginine biosynthesis; carbamoyl phosphate from bicarbonate: step 1/1. The protein operates within pyrimidine metabolism; UMP biosynthesis via de novo pathway; (S)-dihydroorotate from bicarbonate: step 1/3. Small subunit of the glutamine-dependent carbamoyl phosphate synthetase (CPSase). CPSase catalyzes the formation of carbamoyl phosphate from the ammonia moiety of glutamine, carbonate, and phosphate donated by ATP, constituting the first step of 2 biosynthetic pathways, one leading to arginine and/or urea and the other to pyrimidine nucleotides. The small subunit (glutamine amidotransferase) binds and cleaves glutamine to supply the large subunit with the substrate ammonia. The sequence is that of Carbamoyl phosphate synthase small chain from Lactococcus lactis subsp. lactis (strain IL1403) (Streptococcus lactis).